Here is a 442-residue protein sequence, read N- to C-terminus: Trigger factor (442 aa).

In terms of domain architecture, PPIase FKBP-type spans 162-247 (GDRMTFDFEG…VKAIESRELP (86 aa)).

This sequence belongs to the FKBP-type PPIase family. Tig subfamily.

The protein localises to the cytoplasm. It catalyses the reaction [protein]-peptidylproline (omega=180) = [protein]-peptidylproline (omega=0). Its function is as follows. Involved in protein export. Acts as a chaperone by maintaining the newly synthesized protein in an open conformation. Functions as a peptidyl-prolyl cis-trans isomerase. This Magnetococcus marinus (strain ATCC BAA-1437 / JCM 17883 / MC-1) protein is Trigger factor.